Reading from the N-terminus, the 150-residue chain is Large ribosomal subunit protein bL9 (150 aa).

The protein belongs to the bacterial ribosomal protein bL9 family.

Its function is as follows. Binds to the 23S rRNA. The polypeptide is Large ribosomal subunit protein bL9 (Cupriavidus taiwanensis (strain DSM 17343 / BCRC 17206 / CCUG 44338 / CIP 107171 / LMG 19424 / R1) (Ralstonia taiwanensis (strain LMG 19424))).